Consider the following 94-residue polypeptide: Large ribosomal subunit protein bL27 (94 aa).

The propeptide occupies 1 to 9 (MLKLNLQFF).

It belongs to the bacterial ribosomal protein bL27 family. The N-terminus is cleaved by ribosomal processing cysteine protease Prp.

This Staphylococcus haemolyticus (strain JCSC1435) protein is Large ribosomal subunit protein bL27.